Reading from the N-terminus, the 322-residue chain is Lipoyl synthase (322 aa).

[4Fe-4S] cluster contacts are provided by Cys69, Cys74, Cys80, Cys95, Cys99, Cys102, and Ser309. Residues Phe81–Asp298 enclose the Radical SAM core domain.

It belongs to the radical SAM superfamily. Lipoyl synthase family. Requires [4Fe-4S] cluster as cofactor.

It localises to the cytoplasm. It carries out the reaction [[Fe-S] cluster scaffold protein carrying a second [4Fe-4S](2+) cluster] + N(6)-octanoyl-L-lysyl-[protein] + 2 oxidized [2Fe-2S]-[ferredoxin] + 2 S-adenosyl-L-methionine + 4 H(+) = [[Fe-S] cluster scaffold protein] + N(6)-[(R)-dihydrolipoyl]-L-lysyl-[protein] + 4 Fe(3+) + 2 hydrogen sulfide + 2 5'-deoxyadenosine + 2 L-methionine + 2 reduced [2Fe-2S]-[ferredoxin]. It functions in the pathway protein modification; protein lipoylation via endogenous pathway; protein N(6)-(lipoyl)lysine from octanoyl-[acyl-carrier-protein]: step 2/2. In terms of biological role, catalyzes the radical-mediated insertion of two sulfur atoms into the C-6 and C-8 positions of the octanoyl moiety bound to the lipoyl domains of lipoate-dependent enzymes, thereby converting the octanoylated domains into lipoylated derivatives. The protein is Lipoyl synthase of Psychromonas ingrahamii (strain DSM 17664 / CCUG 51855 / 37).